We begin with the raw amino-acid sequence, 382 residues long: Carbamoyl phosphate synthase small chain (382 aa).

Positions 1 to 189 (MIKSALLVLE…GLPEAKKEDE (189 aa)) are CPSase. Positions 47, 241, and 243 each coordinate L-glutamine. Residues 193–380 (HVVAYDFGAK…IALIEQYRKT (188 aa)) enclose the Glutamine amidotransferase type-1 domain. The active-site Nucleophile is Cys-269. Leu-270, Gln-273, Asn-311, Gly-313, and Phe-314 together coordinate L-glutamine. Active-site residues include His-353 and Glu-355.

The protein belongs to the CarA family. As to quaternary structure, composed of two chains; the small (or glutamine) chain promotes the hydrolysis of glutamine to ammonia, which is used by the large (or ammonia) chain to synthesize carbamoyl phosphate. Tetramer of heterodimers (alpha,beta)4.

It catalyses the reaction hydrogencarbonate + L-glutamine + 2 ATP + H2O = carbamoyl phosphate + L-glutamate + 2 ADP + phosphate + 2 H(+). It carries out the reaction L-glutamine + H2O = L-glutamate + NH4(+). Its pathway is amino-acid biosynthesis; L-arginine biosynthesis; carbamoyl phosphate from bicarbonate: step 1/1. It functions in the pathway pyrimidine metabolism; UMP biosynthesis via de novo pathway; (S)-dihydroorotate from bicarbonate: step 1/3. Its function is as follows. Small subunit of the glutamine-dependent carbamoyl phosphate synthetase (CPSase). CPSase catalyzes the formation of carbamoyl phosphate from the ammonia moiety of glutamine, carbonate, and phosphate donated by ATP, constituting the first step of 2 biosynthetic pathways, one leading to arginine and/or urea and the other to pyrimidine nucleotides. The small subunit (glutamine amidotransferase) binds and cleaves glutamine to supply the large subunit with the substrate ammonia. The sequence is that of Carbamoyl phosphate synthase small chain from Escherichia coli O6:H1 (strain CFT073 / ATCC 700928 / UPEC).